The chain runs to 336 residues: Dihydroorotate dehydrogenase (quinone) (336 aa).

FMN is bound by residues A62–K66 and T86. K66 is a binding site for substrate. N111–F115 contributes to the substrate binding site. FMN is bound by residues N139 and N172. N172 is a substrate binding site. Catalysis depends on S175, which acts as the Nucleophile. Substrate is bound at residue N177. FMN-binding residues include K217 and T245. N246 to T247 serves as a coordination point for substrate. FMN is bound by residues G268, G297, and Y318 to S319.

It belongs to the dihydroorotate dehydrogenase family. Type 2 subfamily. In terms of assembly, monomer. The cofactor is FMN.

The protein localises to the cell membrane. The enzyme catalyses (S)-dihydroorotate + a quinone = orotate + a quinol. Its pathway is pyrimidine metabolism; UMP biosynthesis via de novo pathway; orotate from (S)-dihydroorotate (quinone route): step 1/1. Catalyzes the conversion of dihydroorotate to orotate with quinone as electron acceptor. This Salmonella typhi protein is Dihydroorotate dehydrogenase (quinone).